Consider the following 873-residue polypeptide: Sine oculis-binding protein homolog (873 aa).

The span at 1 to 14 shows a compositional bias: basic and acidic residues; that stretch reads MAEMEKEGRPPENK. A disordered region spans residues 1 to 26; that stretch reads MAEMEKEGRPPENKRSRKPAHPVKRE. 2 consecutive FCS-type zinc fingers follow at residues 142 to 180 and 216 to 256; these read DDVS…KCFA and FKNN…KCLN. Disordered regions lie at residues 308 to 339, 413 to 484, and 550 to 646; these read RRKA…DTAN, RGPP…PGAP, and KPPN…PGVL. Positions 318 to 339 are enriched in polar residues; sequence AGQSQGPGPSASTTVSPSDTAN. Low complexity predominate over residues 417 to 433; sequence HHASNPNSPLSNPMLPG. Pro residues predominate over residues 460 to 484; that stretch reads IHPPSTPTMPGNPPGLLPPPPPGAP. Positions 614 to 625 are enriched in basic and acidic residues; the sequence is EHGRSEVVDLTR. The SUMO interaction motif 1 (SIM); mediates the binding to polysumoylated substrates motif lies at 620–624; that stretch reads VVDLT. Position 629 is a phosphoserine (S629). Positions 653–657 match the SUMO interaction motif 2 (SIM); mediates the binding to polysumoylated substrates motif; sequence VIDLT. K677 is covalently cross-linked (Glycyl lysine isopeptide (Lys-Gly) (interchain with G-Cter in SUMO2)). The residue at position 699 (S699) is a Phosphoserine. The interval 730–771 is disordered; sequence AAAEGAKSAEPPPEQPPPPPPPAPPKKLLSPEEPAVSELESV. Residues 739–754 are compositionally biased toward pro residues; the sequence is EPPPEQPPPPPPPAPP.

Belongs to the SOBP family. As to quaternary structure, interacts (via SIM domains) with SUMO1 and SUMO2.

Its function is as follows. Implicated in development of the cochlea. This Homo sapiens (Human) protein is Sine oculis-binding protein homolog.